The chain runs to 288 residues: 4-diphosphocytidyl-2-C-methyl-D-erythritol kinase (288 aa).

The active site involves K8. P92–T102 contributes to the ATP binding site. D134 is a catalytic residue.

It belongs to the GHMP kinase family. IspE subfamily.

It catalyses the reaction 4-CDP-2-C-methyl-D-erythritol + ATP = 4-CDP-2-C-methyl-D-erythritol 2-phosphate + ADP + H(+). Its pathway is isoprenoid biosynthesis; isopentenyl diphosphate biosynthesis via DXP pathway; isopentenyl diphosphate from 1-deoxy-D-xylulose 5-phosphate: step 3/6. Its function is as follows. Catalyzes the phosphorylation of the position 2 hydroxy group of 4-diphosphocytidyl-2C-methyl-D-erythritol. The polypeptide is 4-diphosphocytidyl-2-C-methyl-D-erythritol kinase (Clostridium perfringens (strain ATCC 13124 / DSM 756 / JCM 1290 / NCIMB 6125 / NCTC 8237 / Type A)).